Consider the following 797-residue polypeptide: Ribosome biogenesis protein BOP1 homolog (797 aa).

Disordered regions lie at residues 22 to 112 (LVPS…GGGP) and 149 to 177 (SICA…RNTV). A compositionally biased stretch (low complexity) spans 61-73 (AGAAAAAVEGTAA). Residues 74 to 87 (PEDEAADNSSEEDA) are compositionally biased toward acidic residues. Gly residues predominate over residues 90 to 112 (GSHGEGAGEGGGSGTWPGNGGGP). WD repeat units lie at residues 462–502 (GHMG…CWRT), 504–544 (VLEG…EEAE), 581–623 (RLRF…SQNP), 626–664 (KNRG…LAKK), 667–706 (GGGG…KPYK), 710–749 (YHSA…DLLT), and 766–797 (TASE…LYCN).

The protein belongs to the WD repeat BOP1/ERB1 family.

The protein localises to the nucleus. The protein resides in the nucleolus. Its subcellular location is the nucleoplasm. In terms of biological role, required for maturation of ribosomal RNAs and formation of the large ribosomal subunit. The chain is Ribosome biogenesis protein BOP1 homolog from Chlamydomonas reinhardtii (Chlamydomonas smithii).